We begin with the raw amino-acid sequence, 182 residues long: Putative manganese efflux pump MntP (182 aa).

6 helical membrane passes run 6–26, 37–57, 72–92, 101–121, 131–151, and 162–182; these read LIPL…VSLG, ILYI…IGMV, FAGA…SILE, IGIS…SVGL, IITI…GLLL, and YGEI…LFPI.

Belongs to the MntP (TC 9.B.29) family.

It localises to the cell membrane. Probably functions as a manganese efflux pump. This Bacillus mycoides (strain KBAB4) (Bacillus weihenstephanensis) protein is Putative manganese efflux pump MntP.